Here is a 539-residue protein sequence, read N- to C-terminus: Chaperonin GroEL (539 aa).

Residues 29–32 (TLGP), 86–90 (DGTTT), G412, 475–477 (NAA), and D491 contribute to the ATP site.

This sequence belongs to the chaperonin (HSP60) family. In terms of assembly, forms a cylinder of 14 subunits composed of two heptameric rings stacked back-to-back. Interacts with the co-chaperonin GroES.

It is found in the cytoplasm. The catalysed reaction is ATP + H2O + a folded polypeptide = ADP + phosphate + an unfolded polypeptide.. Its function is as follows. Together with its co-chaperonin GroES, plays an essential role in assisting protein folding. The GroEL-GroES system forms a nano-cage that allows encapsulation of the non-native substrate proteins and provides a physical environment optimized to promote and accelerate protein folding. In Tsukamurella tyrosinosolvens, this protein is Chaperonin GroEL.